A 441-amino-acid polypeptide reads, in one-letter code: Ribosomal protein uS12 methylthiotransferase RimO (441 aa).

In terms of domain architecture, MTTase N-terminal spans 7–117; that stretch reads PKISFVSLGC…VLEAVHRAKP (111 aa). Residues Cys-16, Cys-52, Cys-81, Cys-148, Cys-152, and Cys-155 each contribute to the [4Fe-4S] cluster site. The region spanning 134–371 is the Radical SAM core domain; the sequence is LTPRHYAYLK…MARQQVISAR (238 aa). Positions 374 to 440 constitute a TRAM domain; that stretch reads KRKVGTRQQI…AYDLHGTVAG (67 aa).

It belongs to the methylthiotransferase family. RimO subfamily. The cofactor is [4Fe-4S] cluster.

It is found in the cytoplasm. It carries out the reaction L-aspartate(89)-[ribosomal protein uS12]-hydrogen + (sulfur carrier)-SH + AH2 + 2 S-adenosyl-L-methionine = 3-methylsulfanyl-L-aspartate(89)-[ribosomal protein uS12]-hydrogen + (sulfur carrier)-H + 5'-deoxyadenosine + L-methionine + A + S-adenosyl-L-homocysteine + 2 H(+). Its function is as follows. Catalyzes the methylthiolation of an aspartic acid residue of ribosomal protein uS12. This is Ribosomal protein uS12 methylthiotransferase RimO from Rhodopseudomonas palustris (strain BisB5).